Here is a 485-residue protein sequence, read N- to C-terminus: Aspartyl protease family protein 2 (485 aa).

A signal peptide spans 1-23; that stretch reads MVGRRKALLFSLCFFFLSLPSFS. Residues 43–71 form a disordered region; that stretch reads PVSFQPDSDSESLLESEFESGSDSESSSS. A compositionally biased stretch (acidic residues) spans 50-64; the sequence is SDSESLLESEFESGS. In terms of domain architecture, Peptidase A1 spans 142-480; it reads YFTRLGVGTP…DLASSRVGFA (339 aa). Active-site residues include aspartate 160 and aspartate 365.

It belongs to the peptidase A1 family.

Its function is as follows. Aspartyl protease. Not able to cleave BAG6. The protein is Aspartyl protease family protein 2 of Arabidopsis thaliana (Mouse-ear cress).